The sequence spans 191 residues: GDP-mannose pyrophosphatase (191 aa).

Residues tyrosine 17, 38-40 (KRE), arginine 67, and 85-87 (AGL) each bind GDP-alpha-D-mannose. The Nudix hydrolase domain maps to 43–180 (DRGNGATILL…EIRDGKTVLL (138 aa)). The Mg(2+) site is built by alanine 85, glutamate 100, and glutamate 104. A Nudix box motif is present at residues 86-106 (GLLDNDEPEACIRKEAIEETG). GDP-alpha-D-mannose is bound by residues glutamate 104, glutamate 127, 150–151 (DE), and lysine 176. Glutamate 151 contacts Mg(2+).

This sequence belongs to the Nudix hydrolase family. NudK subfamily. In terms of assembly, homodimer. Requires Mg(2+) as cofactor.

The catalysed reaction is GDP-alpha-D-mannose + H2O = alpha-D-mannose 1-phosphate + GMP + 2 H(+). Functionally, nucleoside diphosphate sugar hydrolase that hydrolyzes GDP-mannose as its preferred substrate, yielding GMP and mannose-1-phosphate. The sequence is that of GDP-mannose pyrophosphatase (nudK) from Citrobacter koseri (strain ATCC BAA-895 / CDC 4225-83 / SGSC4696).